Here is a 278-residue protein sequence, read N- to C-terminus: HTH-type transcriptional activator RhaS (278 aa).

The HTH araC/xylS-type domain maps to 174–272; sequence NHLIAWLEDH…GWSPREIRQG (99 aa). 2 consecutive DNA-binding regions (H-T-H motif) follow at residues 191 to 212 and 239 to 262; these read EAIA…KQHT and VTHI…RREF.

As to quaternary structure, binds DNA as a dimer.

Its subcellular location is the cytoplasm. Functionally, activates expression of the rhaBAD and rhaT operons. In Escherichia fergusonii (strain ATCC 35469 / DSM 13698 / CCUG 18766 / IAM 14443 / JCM 21226 / LMG 7866 / NBRC 102419 / NCTC 12128 / CDC 0568-73), this protein is HTH-type transcriptional activator RhaS.